The primary structure comprises 356 residues: Phosphoribosyl pyrophosphate synthase-associated protein 1 (356 aa).

The residue at position 1 (M1) is an N-acetylmethionine. N2 is modified (N-acetylproline). A phosphoserine mark is found at S177 and S215.

Belongs to the ribose-phosphate pyrophosphokinase family. As to quaternary structure, binds to PRPS1 and PRPS2. In terms of tissue distribution, ubiquitous.

Functionally, seems to play a negative regulatory role in 5-phosphoribose 1-diphosphate synthesis. This Homo sapiens (Human) protein is Phosphoribosyl pyrophosphate synthase-associated protein 1 (PRPSAP1).